The chain runs to 164 residues: Anterior gradient protein 2-B (164 aa).

An N-terminal signal peptide occupies residues 1–20; sequence MESVLKSLFVLLVATSFTLA. Short sequence motifs (homodimer stabilization; interchain) lie at residues 34–43 and 49–56; these read SRGWGDNLEW and EGLYKAKA.

The protein belongs to the AGR family. Monomer and homodimer.

The protein resides in the secreted. It is found in the endoplasmic reticulum. The sequence is that of Anterior gradient protein 2-B (agr2-b) from Xenopus laevis (African clawed frog).